Here is a 149-residue protein sequence, read N- to C-terminus: MHCPFCSATDTKVIDSRLVADGHQVRRRRECTLCHERFTTFEGAELVMPRVIKRDDTRQPFDEDKLRGGMLRAVEKRPVSMDQLEQALTKIKSTLRATGEREINSEMIGNLMMEQLMHLDKVAYIRFASVYRAFEDVSQFGEAIAKLEK.

A zinc finger spans residues 3–34; it reads CPFCSATDTKVIDSRLVADGHQVRRRRECTLC. In terms of domain architecture, ATP-cone spans 49–139; sequence PRVIKRDDTR…VYRAFEDVSQ (91 aa).

Belongs to the NrdR family. Requires Zn(2+) as cofactor.

Negatively regulates transcription of bacterial ribonucleotide reductase nrd genes and operons by binding to NrdR-boxes. In Shewanella denitrificans (strain OS217 / ATCC BAA-1090 / DSM 15013), this protein is Transcriptional repressor NrdR.